The primary structure comprises 398 residues: Growth-regulating factor 3 (398 aa).

Low complexity predominate over residues 1–17 (MDLQLKQWRSQQQQQHQ). Residues 1–32 (MDLQLKQWRSQQQQQHQTESEEQPSAAKIPKH) are disordered. One can recognise a QLQ domain in the interval 76–111 (FFSWAQWQELELQALIYRYMLAGAAVPQELLLPIKK). In terms of domain architecture, WRC spans 144 to 188 (DPEPGRCRRTDGKKWRCSRDVFAGHKYCERHMHRGRNRSRKPVET). Short sequence motifs (bipartite nuclear localization signal) lie at residues 149–159 (RCRRTDGKKWR) and 177–184 (RGRNRSRK). Composition is skewed to polar residues over residues 299–350 (SLQE…RDQQ) and 383–398 (PTSVLHQLGVSTQAFH). Positions 299–398 (SLQEADNSSS…QLGVSTQAFH (100 aa)) are disordered.

This sequence belongs to the GRF family. In terms of tissue distribution, strongly expressed in actively growing and developing tissues, such as roots, upper stems, and shoot tips containing the shoot apical meristem (SAM) and flower buds. Also expressed in mature flowers, but weakly expressed in mature stems and leaves.

The protein resides in the nucleus. Transcription activator that plays a role in the regulation of cell expansion in leaf and cotyledons tissues. Component of a network formed by miR396, the GRFs and their interacting factors (GIFs) acting in the regulation of meristem function, at least partially through the control of cell proliferation. microRNA396-GRF1/GRF3 regulatory module acts as a developmental regulator in the reprogramming of root cells during cyst nematode infection, leading to the formation of the syncytium. The protein is Growth-regulating factor 3 (GRF3) of Arabidopsis thaliana (Mouse-ear cress).